The sequence spans 292 residues: MSLIDWFAARRKDQFVGKVSQDTEESDGLWVKCSECGQVAYRKDLISNFNVCSNCSHHNRINSDERINIIADKDSFKEFDDSLSPTDPLKFKDRRSYSDRIKESQEGTGLKDGVITGICSINSMPLALAVMDFRFMGGSMGSVVGEKITRIIEKATIENYPIVIVCASGGARMQEGMLSLMQMAKISGALKKHRAKNLLYMPLLTHPTTGGVTASFAMLGDLILAEPKALIGFAGRRVIEQTLREKLPDNFQTAEYLLEHGFVDVIVNRKELKSTLTSILKIHGVKDLMGAN.

The CoA carboxyltransferase N-terminal domain maps to 29-292 (LWVKCSECGQ…HGVKDLMGAN (264 aa)). 4 residues coordinate Zn(2+): Cys-33, Cys-36, Cys-52, and Cys-55. The segment at 33-55 (CSECGQVAYRKDLISNFNVCSNC) adopts a C4-type zinc-finger fold.

This sequence belongs to the AccD/PCCB family. As to quaternary structure, acetyl-CoA carboxylase is a heterohexamer composed of biotin carboxyl carrier protein (AccB), biotin carboxylase (AccC) and two subunits each of ACCase subunit alpha (AccA) and ACCase subunit beta (AccD). Zn(2+) is required as a cofactor.

The protein localises to the cytoplasm. It catalyses the reaction N(6)-carboxybiotinyl-L-lysyl-[protein] + acetyl-CoA = N(6)-biotinyl-L-lysyl-[protein] + malonyl-CoA. The protein operates within lipid metabolism; malonyl-CoA biosynthesis; malonyl-CoA from acetyl-CoA: step 1/1. Component of the acetyl coenzyme A carboxylase (ACC) complex. Biotin carboxylase (BC) catalyzes the carboxylation of biotin on its carrier protein (BCCP) and then the CO(2) group is transferred by the transcarboxylase to acetyl-CoA to form malonyl-CoA. This is Acetyl-coenzyme A carboxylase carboxyl transferase subunit beta from Prochlorococcus marinus (strain MIT 9515).